The sequence spans 268 residues: Forkhead box protein R1 (268 aa).

A disordered region spans residues 91–126 (EDSCSEASEVQQPLPPCRQKRKQRRSTVPLPLAPGR). The fork-head DNA-binding region spans 149-248 (RPPLHYFHLI…KEARTLASTQ (100 aa)).

As to expression, expressed in adult germ cells (at protein level). Expressed in heart, liver, lung and embryonic brain.

Its subcellular location is the nucleus. It is found in the cytoplasm. The protein localises to the perinuclear region. Its function is as follows. Transcription factor which acts as both an activator and a repressor. Activates transcription of a number of genes including the heat shock chaperones HSPA1A and HSPA6 and the antioxidant NADPH-dependent reductase DHRS2 which are involved in protection against oxidative stress. Required for normal brain development. This is Forkhead box protein R1 (Foxr1) from Mus musculus (Mouse).